A 330-amino-acid chain; its full sequence is Polyprenal reductase (330 aa).

Residues 1–19 (MASWVGTELSALNPLRTLW) lie on the Cytoplasmic side of the membrane. Residues 20–40 (LALAAAFLLALLLQLAPAGLL) form a helical membrane-spanning segment. At 41 to 74 (PNCALFQDLIRYGKTKLSGPRRPAVCRAFDVPKR) the chain is on the lumenal side. A helical transmembrane segment spans residues 75–95 (YFSHFYVVSVLWNGFLLWFLS). Over 96–132 (RSLFLGAPFPNWLRALLRTLGSTQFRALEMESKASQM) the chain is Cytoplasmic. Residues 133-153 (LVGELALSAFLVLVFLWVHSV) traverse the membrane as a helical segment. The Lumenal portion of the chain corresponds to 154–168 (RRLFECFYISVFSNA). Residues 169–189 (VMHVVQYCFGLVYYVLVGLTV) traverse the membrane as a helical segment. The Cytoplasmic segment spans residues 190–206 (LSQVPMDDKNVYMLGKN). The chain crosses the membrane as a helical span at residues 207–227 (LLLPARWFHVLGMMMFLWSSA). Over 228–277 (HQYECHVILSNLRRNKKGAIVHCQHRIPFGDWFEYVSSANYLAELMIYIS) the chain is Lumenal. The chain crosses the membrane as a helical span at residues 278–298 (MAVTFGFHNFTWWLVVAYVFF). Residues 299-330 (CQALSAFFNHKFYKSTFVSYPKHRKAFLPFLF) are Cytoplasmic-facing.

Belongs to the steroid 5-alpha reductase family. Polyprenal reductase subfamily.

It localises to the endoplasmic reticulum membrane. The catalysed reaction is a di-trans,poly-cis-dolichal + NADP(+) = a di-trans,poly-cis-polyprenal + NADPH + H(+). It catalyses the reaction a 3-oxo-5alpha-steroid + NADP(+) = a 3-oxo-Delta(4)-steroid + NADPH + H(+). The enzyme catalyses androst-4-ene-3,17-dione + NADPH + H(+) = 5alpha-androstan-3,17-dione + NADP(+). It carries out the reaction 17beta-hydroxy-5alpha-androstan-3-one + NADP(+) = testosterone + NADPH + H(+). The protein operates within protein modification; protein glycosylation. Plays a key role in early steps of protein N-linked glycosylation by being involved in the conversion of polyprenol into dolichol. Acts as a polyprenal reductase that mediates the reduction of polyprenal into dolichal in a NADP-dependent mechanism. Dolichols are required for the synthesis of dolichol-linked monosaccharides and the oligosaccharide precursor used for N-glycosylation. Also able to convert testosterone (T) into 5-alpha-dihydrotestosterone (DHT). The chain is Polyprenal reductase from Mesocricetus auratus (Golden hamster).